We begin with the raw amino-acid sequence, 449 residues long: Glucose-6-phosphate isomerase 1 (449 aa).

Threonine 38 carries the phosphothreonine modification. The active-site Proton donor is glutamate 290. Catalysis depends on residues histidine 311 and lysine 425.

This sequence belongs to the GPI family. As to quaternary structure, homodimer.

It is found in the cytoplasm. The catalysed reaction is alpha-D-glucose 6-phosphate = beta-D-fructose 6-phosphate. The protein operates within carbohydrate biosynthesis; gluconeogenesis. It functions in the pathway carbohydrate degradation; glycolysis; D-glyceraldehyde 3-phosphate and glycerone phosphate from D-glucose: step 2/4. Functionally, catalyzes the reversible isomerization of glucose-6-phosphate to fructose-6-phosphate. This is Glucose-6-phosphate isomerase 1 from Geobacillus stearothermophilus (Bacillus stearothermophilus).